The sequence spans 128 residues: Large ribosomal subunit protein uL22 (128 aa).

The protein belongs to the universal ribosomal protein uL22 family. In terms of assembly, part of the 50S ribosomal subunit.

This protein binds specifically to 23S rRNA; its binding is stimulated by other ribosomal proteins, e.g. L4, L17, and L20. It is important during the early stages of 50S assembly. It makes multiple contacts with different domains of the 23S rRNA in the assembled 50S subunit and ribosome. Its function is as follows. The globular domain of the protein is located near the polypeptide exit tunnel on the outside of the subunit, while an extended beta-hairpin is found that lines the wall of the exit tunnel in the center of the 70S ribosome. The protein is Large ribosomal subunit protein uL22 of Nitrobacter winogradskyi (strain ATCC 25391 / DSM 10237 / CIP 104748 / NCIMB 11846 / Nb-255).